The chain runs to 1484 residues: Cystic fibrosis transmembrane conductance regulator (1484 aa).

Residues 1 to 77 (MQRSPLEKAS…KLINALRRCF (77 aa)) are Cytoplasmic-facing. Residues 78-98 (FWRFMFYGIILYLGEVTKSVQ) traverse the membrane as a helical segment. In terms of domain architecture, ABC transmembrane type-1 1 spans 81–365 (FMFYGIILYL…WAVQTWYDSL (285 aa)). The Extracellular segment spans residues 99 to 122 (PLLLGRIIASYDPDNKEERSIAIY). A helical transmembrane segment spans residues 123-146 (LGIGLCLLFVMRTLLLHPAIFGLH). The Cytoplasmic portion of the chain corresponds to 147–195 (RIGMQMRIAMFSLIYKKTLKLSSRVLDKISIGQLVSLLSNNLNKFDEGL). The chain crosses the membrane as a helical span at residues 196 to 216 (ALAHFVWIAPLQVTLLMGLLW). Residues 217–222 (DLLQAS) are Extracellular-facing. A helical transmembrane segment spans residues 223-243 (AFCGLAFLIVLALFQAGLGRM). The Cytoplasmic segment spans residues 244 to 298 (MMKYRDQRAGKINERLVITSEMIENIQSVKAYCWEEAMEKMIESIRQTELKLTRK). The helical transmembrane segment at 299–319 (AAYVRYFNSSAFFFSGFFVVF) threads the bilayer. The Extracellular portion of the chain corresponds to 320–339 (LSVLPYALIKTIVLRKIFTT). The chain crosses the membrane as a helical span at residues 340–358 (ISFCIVLRMAVTRQFPWAV). The Cytoplasmic segment spans residues 359-860 (QTWYDSLGAI…YLRYVTIHKS (502 aa)). ATP-binding positions include Trp401, Ser434, 458 to 465 (GSTGAGKT), and Gln493. The ABC transporter 1 domain maps to 423–646 (NADNSLFFSN…RPDFSSKLMG (224 aa)). Residue Cys524 is the site of S-palmitoyl cysteine attachment. Phosphoserine is present on residues Ser549 and Ser660. A disordered R region region spans residues 654–833 (SAERRNSIIT…EEINEEDLKE (180 aa)). Position 670 is a phosphoserine; by PKA (Ser670). At Ser686 the chain carries Phosphoserine. Lys688 participates in a covalent cross-link: Glycyl lysine isopeptide (Lys-Gly) (interchain with G-Cter in ubiquitin). Phosphoserine is present on residues Ser700 and Ser712. The residue at position 717 (Thr717) is a Phosphothreonine. Residues Ser737, Ser769, Ser792, Ser797, and Ser815 each carry the phosphoserine modification. A helical membrane pass occupies residues 861-881 (LVFVLIWCLVIFLAEVAISLV). The ABC transmembrane type-1 2 domain maps to 861 to 1157 (LVFVLIWCLV…AVNSSIDVDS (297 aa)). The Extracellular portion of the chain corresponds to 882–920 (VLWLLKKTASQDKGNSTQSINSSYTVIFTSTSTYYVFYI). Asn896 and Asn902 each carry an N-linked (GlcNAc...) asparagine glycan. A discontinuously helical transmembrane segment spans residues 921 to 941 (YVGVADTLLALGFFRGLPLVH). The Cytoplasmic portion of the chain corresponds to 942–992 (TLITVSKILHHKMLHAVLQAPMSTLNALKAGGILNRFSKDIAILDDLLPLT). Residues 993–1013 (IFDFVQLLLIVIGAVTVVSAL) form a helical membrane-spanning segment. Topologically, residues 1014 to 1015 (QP) are extracellular. Residues 1016-1036 (YIFLATVPVIAAFIMLRAYFL) form a helical membrane-spanning segment. Residues 1037–1097 (HTSQQLKQLE…TANWFLYLST (61 aa)) are Cytoplasmic-facing. A helical transmembrane segment spans residues 1098–1118 (LRWFQMRMEIIFVIFFIAITF). Topologically, residues 1119-1132 (ISILTTGEGVGAVG) are extracellular. The helical transmembrane segment at 1133 to 1153 (IILTLAMNIMGTLQWAVNSSI) threads the bilayer. Residues 1154–1484 (DVDSLMRSVS…TEEEVQETRL (331 aa)) are Cytoplasmic-facing. In terms of domain architecture, ABC transporter 2 spans 1214-1447 (MTVKDLTAKY…KSLFRQAISP (234 aa)). Residues Tyr1223 and 1248-1255 (GRTGSGKS) each bind ATP. The interaction with GORASP2 stretch occupies residues 1390-1484 (RTLKQAFADC…TEEEVQETRL (95 aa)). Residue Cys1399 is the site of S-palmitoyl cysteine attachment. Phosphoserine is present on residues Ser1448 and Ser1460. Positions 1456-1465 (HRNSSKHKSR) are enriched in basic residues. Residues 1456–1484 (HRNSSKHKSRSQIAALKEETEEEVQETRL) form a disordered region. Positions 1474–1484 (ETEEEVQETRL) are enriched in acidic residues. The short motif at 1482-1484 (TRL) is the PDZ-binding element.

This sequence belongs to the ABC transporter superfamily. ABCC family. CFTR transporter (TC 3.A.1.202) subfamily. Monomer; does not require oligomerization for channel activity. May form oligomers in the membrane. Interacts with SLC26A3, SLC26A6 and NHERF1. Interacts with SHANK2. Interacts with MYO6. Interacts (via C-terminus) with GOPC (via PDZ domain); this promotes CFTR internalization and thereby decreases channel activity. Interacts with SLC4A7 through NHERF1. Found in a complex with MYO5B and RAB11A. Interacts with ANO1. Interacts with SLC26A8. Interacts with AHCYL1; the interaction increases CFTR activity. Interacts with CSE1L. The core-glycosylated form interacts with GORASP2 (via PDZ GRASP-type 1 domain) in respone to ER stress. Interacts with MARCHF2; the interaction leads to CFTR ubiqtuitination and degradation. Interacts with ADGRG2. N-glycosylated. Post-translationally, phosphorylated; cAMP treatment promotes phosphorylation and activates the channel. Dephosphorylation decreases the ATPase activity (in vitro). Phosphorylation at PKA sites activates the channel. Phosphorylation at PKC sites enhances the response to phosphorylation by PKA. Phosphorylated by AMPK; this inhibits channel activity. In terms of processing, ubiquitinated, leading to its degradation in the lysosome. Deubiquitination by USP10 in early endosomes enhances its endocytic recycling to the cell membrane. Ubiquitinated by RNF185 during ER stress. Ubiquitinated by MARCHF2.

It is found in the apical cell membrane. Its subcellular location is the early endosome membrane. The protein localises to the cell membrane. It localises to the recycling endosome membrane. The protein resides in the endoplasmic reticulum membrane. It is found in the nucleus. The enzyme catalyses ATP + H2O + closed Cl(-) channel = ADP + phosphate + open Cl(-) channel.. It catalyses the reaction chloride(in) = chloride(out). It carries out the reaction hydrogencarbonate(in) = hydrogencarbonate(out). The catalysed reaction is ATP + H2O = ADP + phosphate + H(+). Functionally, epithelial ion channel that plays an important role in the regulation of epithelial ion and water transport and fluid homeostasis. Mediates the transport of chloride ions across the cell membrane. Possesses an intrinsic ATPase activity and utilizes ATP to gate its channel; the passive flow of anions through the channel is gated by cycles of ATP binding and hydrolysis by the ATP-binding domains. The ion channel is also permeable to HCO(3)(-); selectivity depends on the extracellular chloride concentration. Exerts its function also by modulating the activity of other ion channels and transporters. Contributes to the regulation of the pH and the ion content of the epithelial fluid layer. Modulates the activity of the epithelial sodium channel (ENaC) complex, in part by regulating the cell surface expression of the ENaC complex. May regulate bicarbonate secretion and salvage in epithelial cells by regulating the transporter SLC4A7. Can inhibit the chloride channel activity of ANO1. Plays a role in the chloride and bicarbonate homeostasis during sperm epididymal maturation and capacitation. This Mustela putorius furo (European domestic ferret) protein is Cystic fibrosis transmembrane conductance regulator.